The following is a 259-amino-acid chain: Protein CWC15 homolog (259 aa).

The disordered stretch occupies residues 1-182 (MTTAARPTFD…EKKQEDERIR (182 aa)). Basic and acidic residues predominate over residues 52-71 (DENRNRDFRKELEEREREAR). Low complexity-rich tracts occupy residues 72–82 (SGTGATSSSSG) and 114–126 (QQQAQQAAQQQAA). Residues 129 to 150 (DADEPLDNDSSDSDSDSDDDDA) are compositionally biased toward acidic residues. Positions 150–182 (AALLAELQKIKQERLQETARRESEKKQEDERIR) form a coiled coil. The span at 157-182 (QKIKQERLQETARRESEKKQEDERIR) shows a compositional bias: basic and acidic residues.

It belongs to the CWC15 family.

Functionally, involved in pre-mRNA splicing. The polypeptide is Protein CWC15 homolog (c12.1) (Drosophila melanogaster (Fruit fly)).